The primary structure comprises 366 residues: Cobalt-precorrin-5B C(1)-methyltransferase (366 aa).

Belongs to the CbiD family.

It carries out the reaction Co-precorrin-5B + S-adenosyl-L-methionine = Co-precorrin-6A + S-adenosyl-L-homocysteine. It participates in cofactor biosynthesis; adenosylcobalamin biosynthesis; cob(II)yrinate a,c-diamide from sirohydrochlorin (anaerobic route): step 6/10. Catalyzes the methylation of C-1 in cobalt-precorrin-5B to form cobalt-precorrin-6A. The polypeptide is Cobalt-precorrin-5B C(1)-methyltransferase (Thermoanaerobacter sp. (strain X514)).